A 150-amino-acid polypeptide reads, in one-letter code: Large ribosomal subunit protein uL15 (150 aa).

Over residues 1–15 the composition is skewed to polar residues; that stretch reads MNLSNLQPAEGSTHN. The disordered stretch occupies residues 1–52; the sequence is MNLSNLQPAEGSTHNQNKRLGRGEGSGKGGTSARGHKGAKSRSGYSKKIGFE. Positions 23–32 are enriched in gly residues; it reads GEGSGKGGTS.

It belongs to the universal ribosomal protein uL15 family. Part of the 50S ribosomal subunit.

Binds to the 23S rRNA. The sequence is that of Large ribosomal subunit protein uL15 from Flavobacterium psychrophilum (strain ATCC 49511 / DSM 21280 / CIP 103535 / JIP02/86).